Here is a 403-residue protein sequence, read N- to C-terminus: Digeranylgeranylglycerophospholipid reductase 1 (403 aa).

Positions 14, 33, 44, 45, 47, 98, 122, 277, 289, and 290 each coordinate FAD.

Belongs to the geranylgeranyl reductase family. DGGGPL reductase subfamily. FAD is required as a cofactor.

It carries out the reaction a 2,3-bis-O-phytanyl-sn-glycerol 1-phospholipid + 8 A = a 2,3-bis-O-(geranylgeranyl)-sn-glycerol 1-phospholipid + 8 AH2. It catalyses the reaction 2,3-bis-O-(phytanyl)-sn-glycerol 1-phosphate + 8 A = 2,3-bis-O-(geranylgeranyl)-sn-glycerol 1-phosphate + 8 AH2. The catalysed reaction is CDP-2,3-bis-O-(geranylgeranyl)-sn-glycerol + 8 AH2 = CDP-2,3-bis-O-(phytanyl)-sn-glycerol + 8 A. The enzyme catalyses archaetidylserine + 8 AH2 = 2,3-bis-O-phytanyl-sn-glycero-3-phospho-L-serine + 8 A. Its pathway is membrane lipid metabolism; glycerophospholipid metabolism. Its function is as follows. Is involved in the reduction of 2,3-digeranylgeranylglycerophospholipids (unsaturated archaeols) into 2,3-diphytanylglycerophospholipids (saturated archaeols) in the biosynthesis of archaeal membrane lipids. Catalyzes the formation of archaetidic acid (2,3-di-O-phytanyl-sn-glyceryl phosphate) from 2,3-di-O-geranylgeranylglyceryl phosphate (DGGGP) via the hydrogenation of each double bond of the isoprenoid chains. Is also probably able to reduce double bonds of geranyl groups in CDP-2,3-bis-O-(geranylgeranyl)-sn-glycerol and archaetidylserine, thus acting at various stages in the biosynthesis of archaeal membrane lipids. In Methanosphaera stadtmanae (strain ATCC 43021 / DSM 3091 / JCM 11832 / MCB-3), this protein is Digeranylgeranylglycerophospholipid reductase 1.